The following is a 338-amino-acid chain: Methionine import ATP-binding protein MetN 2 (338 aa).

Positions 2 to 242 (IQLEGVSVDF…PQHAFTRQLV (241 aa)) constitute an ABC transporter domain. 39-46 (GTSGAGKS) serves as a coordination point for ATP.

Belongs to the ABC transporter superfamily. Methionine importer (TC 3.A.1.24) family. In terms of assembly, the complex is composed of two ATP-binding proteins (MetN), two transmembrane proteins (MetI) and a solute-binding protein (MetQ).

The protein localises to the cell inner membrane. The catalysed reaction is L-methionine(out) + ATP + H2O = L-methionine(in) + ADP + phosphate + H(+). The enzyme catalyses D-methionine(out) + ATP + H2O = D-methionine(in) + ADP + phosphate + H(+). Its function is as follows. Part of the ABC transporter complex MetNIQ involved in methionine import. Responsible for energy coupling to the transport system. The polypeptide is Methionine import ATP-binding protein MetN 2 (Pectobacterium atrosepticum (strain SCRI 1043 / ATCC BAA-672) (Erwinia carotovora subsp. atroseptica)).